The following is a 111-amino-acid chain: MSTIKLSLCLLIMLAVCCYEANASQICELVAHETISFLMKSEEELKKELEMYNAPPAAVEAKLEVKRCVDQMSNGDRLVVAETLVYIFLECGVKQWVETYYPEIDFYYDMN.

The signal sequence occupies residues 1–23 (MSTIKLSLCLLIMLAVCCYEANA).

It belongs to the secretoglobin family. Lipophilin subfamily. Prostatein is composed of three different peptides called C1, C2 and C3. These form covalent C1:C3 (F) and C2:C3 (S) heterodimers whose noncovalent association forms tetrameric (C1:C3/C3:C2) prostatein molecules.

The protein resides in the secreted. Functionally, part of prostatein which is the major secretory glycoprotein of ventral prostate gland. The chain is Prostatic steroid-binding protein C1 (Psbpc1) from Rattus norvegicus (Rat).